We begin with the raw amino-acid sequence, 1233 residues long: MGTRAFSHDSIFIPDGGAESEQTVQAMSQDNILGKVKTLQQQLGKNIKFGQRSPNAIPMNKANSGEASLEEDLFLTSPMEIVTQQDIVLSDAENKSSDTPSSLSPLNLPGAGSEMEEKVAPVKPSRPKRHFSSAGTIESVNLDAIPLAIARLDNSAAKHKLAVKPKKQRVSKKHRRLAQDPQHEQGGLESRPCLDQNGHPGEDKPTWHEEEPNPLDSEEERRRQEDYWRELEAKCKRQKAEAAEKRRLEEQRLQALERRLWEENRRQELLEEEGEGQEPPLEAERAPREEQQRSLEAPGWEDAERREREERERLEAEEERRRLQAQAQAEERRRLEEDARLEERRRQEEEEGRCAEELKRQEEEEAEGWEELEQQEAEVQGPPEALEETGEGRRGAEEEDLGEEEEEGQAHLEDWRGQLSELLNDFEERLEDQERLKPEGQREHSEEPGICEEQNPEAERRREQQGRSGDFQGADRPGPEEKREEGDTEPLLKQEGPVEAAQPPVERKEAAALEQGRKVEELRWQEVDERQTMPRPYTFQVSSGGKQILFPKVNLSPVTPAKDTGLTAAPQEPKAPKASPVQHALPSSLSVPHTAILVTGAQLCGPAVNLSQIKDTACKSLLGLEEKKHAEAPAGENPPRGPGDARAGSGKAKPRQESPSSASALAEWASIRSRILKNAESDPRSSERDQLRPGDESTPRGRCDSRGNQRKTPPVNAKFSIMPAWQKFSDGGTETSKQSTEAESIRKRPMLGPSEETAPQPPPAGVRELGKGPEKSEMHREPADTTEGCKFAKDLPSFLVPSLPYPPQKVVAHTEFTTSSDSETANGIAKPDPVMPGGEEKASPFGIKLRRTNYSLRFNCDQQAEQKKKKRHSSTGDSADAGPPAAGSARGEKEMEGVALKHGPSLPQERKQAPSTRRDSAEPSSSRSVPVAHPGPPPASSQTPAPEHDKAANKMPLAQKPALAPKPTSQTPPASPLSKLSRPYLVELLSRRAGRPDPEPSEPSKEDQESSDRRPPSPPGPEERKGQKRDEEEEATERKPASPPLPATQQEKPSQTPEAGRKEKPMLQSRHSLDGSKLTEKVETAQPLWITLALQKQKGFREQQATREERKQAREAKQAEKLSKENVSVSVQPGSSSVSRAGSLHKSTALPEEKRPETAVSRLERREQLKKANTLPTSVTVEISDSAPPAPLVKEVTKRFSTPDAAPVSTEPAWLALAKRKAKAWSDCPQIIK.

3 positions are modified to phosphoserine: S7, S28, and S132. Disordered stretches follow at residues 92–136 (AENK…SAGT), 157–224 (AKHK…RRRQ), and 269–527 (LLEE…WQEV). A compositionally biased stretch (basic residues) spans 157–176 (AKHKLAVKPKKQRVSKKHRR). Composition is skewed to basic and acidic residues over residues 200–211 (PGEDKPTWHEEE), 282–293 (EAERAPREEQQR), 302–322 (DAER…ERRR), and 329–362 (AEER…KRQE). The interval 321–472 (RRLQAQAQAE…EQQGRSGDFQ (152 aa)) is required for interaction with actin-capping proteins. 2 stretches are compositionally biased toward acidic residues: residues 363 to 376 (EEEA…EQQE) and 397 to 407 (EEEDLGEEEEE). The residue at position 420 (S420) is a Phosphoserine. 2 stretches are compositionally biased toward basic and acidic residues: residues 432 to 447 (DQER…HSEE) and 505 to 527 (VERK…WQEV). S556 is subject to Phosphoserine. Position 559 is a phosphothreonine (T559). Disordered stretches follow at residues 560–586 (PAKD…HALP), 629–788 (HAEA…TTEG), 815–1082 (EFTT…TEKV), and 1097–1186 (QKGF…ISDS). The span at 677–707 (KNAESDPRSSERDQLRPGDESTPRGRCDSRG) shows a compositional bias: basic and acidic residues. The span at 732 to 742 (GTETSKQSTEA) shows a compositional bias: polar residues. A compositionally biased stretch (basic and acidic residues) spans 768-783 (ELGKGPEKSEMHREPA). 2 stretches are compositionally biased toward polar residues: residues 815-825 (EFTTSSDSETA) and 852-863 (TNYSLRFNCDQQ). Low complexity predominate over residues 876–889 (GDSADAGPPAAGSA). Basic and acidic residues predominate over residues 908–921 (QERKQAPSTRRDSA). The span at 956–967 (PLAQKPALAPKP) shows a compositional bias: low complexity. T971 carries the phosphothreonine modification. A phosphoserine mark is found at S975 and S1017. A compositionally biased stretch (basic and acidic residues) spans 994 to 1040 (GRPDPEPSEPSKEDQESSDRRPPSPPGPEERKGQKRDEEEEATERKP). A compositionally biased stretch (polar residues) spans 1047–1057 (ATQQEKPSQTP). Basic and acidic residues-rich tracts occupy residues 1059-1082 (AGRK…TEKV) and 1099-1124 (GFRE…KLSK). A compositionally biased stretch (low complexity) spans 1127-1139 (VSVSVQPGSSSVS). Residues 1151 to 1170 (PEEKRPETAVSRLERREQLK) show a composition bias toward basic and acidic residues. The span at 1174 to 1183 (TLPTSVTVEI) shows a compositional bias: polar residues.

In terms of assembly, directly interacts with actin-capping proteins CAPZA1, CAPZA2 and CAPZB; this interaction decreases the binding of capping proteins to actin. As to expression, expressed in intestinal epithelial cells (at protein level).

It is found in the cytoplasm. The protein resides in the cytosol. Its function is as follows. Involved in epithelial cell integrity by acting on the maintenance of the actin cytoskeleton. Positively regulates the actin polymerization, by inhibiting the interaction of actin-capping proteins with actin. The sequence is that of Capping protein-inhibiting regulator of actin dynamics from Homo sapiens (Human).